The following is a 319-amino-acid chain: Probable alcohol dehydrogenase (319 aa).

The Zn(2+) site is built by C18, H39, C68, C71, C74, C82, and C149.

This sequence belongs to the zinc-containing alcohol dehydrogenase family. Requires Zn(2+) as cofactor.

The enzyme catalyses a primary alcohol + NAD(+) = an aldehyde + NADH + H(+). The catalysed reaction is a secondary alcohol + NAD(+) = a ketone + NADH + H(+). This chain is Probable alcohol dehydrogenase (terPD), found in Pseudomonas sp.